The sequence spans 216 residues: Probable transaldolase (216 aa).

Lysine 83 (schiff-base intermediate with substrate) is an active-site residue.

Belongs to the transaldolase family. Type 3B subfamily.

It localises to the cytoplasm. The catalysed reaction is D-sedoheptulose 7-phosphate + D-glyceraldehyde 3-phosphate = D-erythrose 4-phosphate + beta-D-fructose 6-phosphate. Its pathway is carbohydrate degradation; pentose phosphate pathway; D-glyceraldehyde 3-phosphate and beta-D-fructose 6-phosphate from D-ribose 5-phosphate and D-xylulose 5-phosphate (non-oxidative stage): step 2/3. Its function is as follows. Transaldolase is important for the balance of metabolites in the pentose-phosphate pathway. In Caldanaerobacter subterraneus subsp. tengcongensis (strain DSM 15242 / JCM 11007 / NBRC 100824 / MB4) (Thermoanaerobacter tengcongensis), this protein is Probable transaldolase.